The chain runs to 224 residues: UPF0173 metal-dependent hydrolase Ta0764 (224 aa).

The protein belongs to the UPF0173 family.

In Thermoplasma acidophilum (strain ATCC 25905 / DSM 1728 / JCM 9062 / NBRC 15155 / AMRC-C165), this protein is UPF0173 metal-dependent hydrolase Ta0764.